A 398-amino-acid polypeptide reads, in one-letter code: Secreted aspartic protease 2 (398 aa).

A signal peptide spans 1-18 (MFLKNIFIALAIALLVDA). A propeptide spans 19 to 56 (TPTTTKRSAGFVALDFSVVKTPKAFPVTNGQEGKTSKR) (activation peptide). The Peptidase A1 domain occupies 70–384 (YAADITVGSN…DLDDNEISLA (315 aa)). Asp-88 is an active-site residue. Pepstatin A is bound at residue 88–90 (DTG). Cys-103 and Cys-115 are disulfide-bonded. 141–142 (GD) provides a ligand contact to pepstatin A. 2 residues coordinate Zn(2+): Asp-247 and Asp-270. The active site involves Asp-274. 274 to 278 (DSGTT) contacts pepstatin A. A disulfide bond links Cys-312 and Cys-350. 2 N-linked (GlcNAc...) asparagine glycosylation sites follow: Asn-313 and Asn-321.

It belongs to the peptidase A1 family. In terms of assembly, monomer.

It localises to the secreted. The catalysed reaction is Preferential cleavage at the carboxyl of hydrophobic amino acids, but fails to cleave 15-Leu-|-Tyr-16, 16-Tyr-|-Leu-17 and 24-Phe-|-Phe-25 of insulin B chain. Activates trypsinogen, and degrades keratin.. Secreted aspartic peptidases (SAPs) are a group of ten acidic hydrolases considered as key virulence factors. These enzymes supply the fungus with nutrient amino acids as well as are able to degrade the selected host's proteins involved in the immune defense. Induces host inflammatory cytokine production in a proteolytic activity-independent way. Plays a role in tissue damage during superficial infection. Moreover, acts toward human hemoglobin though limited proteolysis to generate a variety of antimicrobial hemocidins, enabling to compete with the other microorganisms of the same physiological niche using the microbicidal peptides generated from the host protein. Functionally, plays a key role in defense against host by cleaving histatin-5 (Hst 5), a peptide from human saliva that carries out fungicidal activity. The cleavage rate decreases in an order of SAP2 &gt; SAP9 &gt; SAP3 &gt; SAP7 &gt; SAP4 &gt; SAP1 &gt; SAP8. The first cleavage occurs between residues 'Lys-17' and 'His-18' of Hst 5, giving DSHAKRHHGYKRKFHEK and HHSHRGY peptides. Simultaneously, the DSHAKRHHGYKRK peptide is also formed. Further fragmentation by SAP2 results in FHEK and DSHAKRHHGY products. In Candida albicans (strain SC5314 / ATCC MYA-2876) (Yeast), this protein is Secreted aspartic protease 2.